Consider the following 122-residue polypeptide: Large ribosomal subunit protein uL18 (122 aa).

The segment at 1–20 is disordered; it reads MFKKVSKNANRLSRHQRVRN.

The protein belongs to the universal ribosomal protein uL18 family. As to quaternary structure, part of the 50S ribosomal subunit; part of the 5S rRNA/L5/L18/L25 subcomplex. Contacts the 5S and 23S rRNAs.

Functionally, this is one of the proteins that bind and probably mediate the attachment of the 5S RNA into the large ribosomal subunit, where it forms part of the central protuberance. This Alkaliphilus oremlandii (strain OhILAs) (Clostridium oremlandii (strain OhILAs)) protein is Large ribosomal subunit protein uL18.